Here is a 318-residue protein sequence, read N- to C-terminus: Taste receptor type 2 member 60 (318 aa).

Topologically, residues 1 to 7 (MNGDHMV) are extracellular. The chain crosses the membrane as a helical span at residues 8 to 28 (LGSSVTDKKAIILVTILLLLR). The Cytoplasmic portion of the chain corresponds to 29–40 (LVAIAGNGFIIA). The chain crosses the membrane as a helical span at residues 41–61 (ALGVEWVLRRMLLPCDXLLVS). Residues 62–88 (LGASRFCLQSVVMGKTIYVFLHPMAFP) lie on the Extracellular side of the membrane. A helical transmembrane segment spans residues 89–109 (YNPVLQFLAFQWDFLNAATLW). Over 110–128 (FSTWLSVFYCVKIAAFTHP) the chain is Cytoplasmic. Residues 129–149 (VFLWLKHKLSGWLPWILFSSV) traverse the membrane as a helical segment. Topologically, residues 150–183 (GLSSFTTILFFIGNHRMYQNYLRNHLQPWNITGN) are extracellular. N-linked (GlcNAc...) asparagine glycosylation is present at asparagine 179. The chain crosses the membrane as a helical span at residues 184–204 (SIRSYCEKFYLFPLKMITWTM). Over 205–234 (PTAVFFICMILLITSLGRHMKKALLTTSGF) the chain is Cytoplasmic. A helical membrane pass occupies residues 235-255 (REPSMQAHIKALLALLSFAML). Topologically, residues 256-264 (FISYFLSLV) are extracellular. The chain crosses the membrane as a helical span at residues 265-285 (FSAAGIFPPLDFKFWVWESVI). Residues 286–318 (YLCAAVHPIILLFSNCRLRAVLKSCRSSRCGTP) lie on the Cytoplasmic side of the membrane.

Belongs to the G-protein coupled receptor T2R family.

It localises to the membrane. In terms of biological role, receptor that may play a role in the perception of bitterness and is gustducin-linked. May play a role in sensing the chemical composition of the gastrointestinal content. The activity of this receptor may stimulate alpha gustducin, mediate PLC-beta-2 activation and lead to the gating of TRPM5. The chain is Taste receptor type 2 member 60 (TAS2R60) from Gorilla gorilla gorilla (Western lowland gorilla).